A 220-amino-acid chain; its full sequence is Protein US2 homolog (220 aa).

This sequence belongs to the herpesviridae US2 family.

This Bovine herpesvirus 1.2 (strain ST) (BoHV-1) protein is Protein US2 homolog.